The primary structure comprises 153 residues: Nucleoside diphosphate kinase 3 (153 aa).

Residues Lys-11, Phe-59, Arg-87, Thr-93, Arg-104, and Asn-114 each coordinate ATP. His-117 (pros-phosphohistidine intermediate) is an active-site residue.

This sequence belongs to the NDK family. Homohexamer. Requires Mg(2+) as cofactor.

It is found in the plastid. Its subcellular location is the chloroplast thylakoid lumen. The enzyme catalyses a 2'-deoxyribonucleoside 5'-diphosphate + ATP = a 2'-deoxyribonucleoside 5'-triphosphate + ADP. The catalysed reaction is a ribonucleoside 5'-diphosphate + ATP = a ribonucleoside 5'-triphosphate + ADP. Functionally, major role in the synthesis of nucleoside triphosphates other than ATP. The ATP gamma phosphate is transferred to the NDP beta phosphate via a ping-pong mechanism, using a phosphorylated active-site intermediate. Shows the highest specificity towards GDP. This is Nucleoside diphosphate kinase 3 from Spinacia oleracea (Spinach).